The chain runs to 441 residues: Putative collagenous domain-containing protein R238 (441 aa).

One can recognise a Collagen-like domain in the interval 164 to 199 (GCKGEKGIKGELGPKGNTGQKGDIGSKGDRGDKGEP). The tract at residues 171 to 198 (IKGELGPKGNTGQKGDIGSKGDRGDKGE) is disordered. The span at 187 to 198 (IGSKGDRGDKGE) shows a compositional bias: basic and acidic residues.

This chain is Putative collagenous domain-containing protein R238, found in Acanthamoeba polyphaga (Amoeba).